The chain runs to 68 residues: Tau-scoloptoxin(04)-Ssm1b (68 aa).

An N-terminal signal peptide occupies residues 1 to 25 (MLKSFCILSVFMVLFLAKFPDLCSG). Residues 26–36 (EEISPLKIVVR) constitute a propeptide that is removed on maturation. 2 disulfides stabilise this stretch: C45/C56 and C50/C63. The highly charged C-terminal region, binds to TRPV1 channel stretch occupies residues 55–67 (RCSIVDKQCIKKE).

The protein belongs to the scoloptoxin-04 family. In terms of tissue distribution, expressed by the venom gland.

The protein resides in the secreted. Extremely potent agonist and potentiator of TRPV1 (EC(50)=470-521.5 nM (mouse)). It strongly promotes the heat activation process by downshifting the activation threshold temperature. It preferably binds to the activated channel and promotes its opening. Holding the channel closed by cooling prevents binding of this toxin, leaving it ineffective. The toxin binds to the charge-rich outer pore region of the channel where it directly interacts with the pore helix and turret, two adjacent structural elements known to be critical for activation gating of TRPV1. In comparison with Sm1b, induces a TRPV1 desensitization with slower kinetics (20 seconds). In vivo, induces pain in mice after intraplantar injection. In terms of biological role, potent agonist and probable potentiator of TRPV1 (EC(50)=38.35 uM (mouse)). Also binds to the outer pore region of TRPV1. In comparison with Sm1a, induces a TRPV1 desensitization with faster kinetics (2 seconds) and leads to a more complete TRPV1 desensitization. Desensitization is achieved by reducing both the open probability and the single-channel conductance upon prolonged exposure. The chain is Tau-scoloptoxin(04)-Ssm1b from Scolopendra mutilans (Chinese red-headed centipede).